A 444-amino-acid chain; its full sequence is MIEDNKENKDHSSERGRVTLIFSLKNEVGGLIKALKIFQENHVNLLHIESRKSKRRNSEFEIFVDCDINREQLNDIFPLLKSHTTVLSVDSPDQLPEKEDVMETVPWFPKKISDLDFCANRVLLYGSELDADHPGFKDNVYRRRRKYFAELAMNYKHGDPIPKIEFTEEEIKTWGTIFRELNKLYPTHACREYLRNLPLLSKYCGYREDNVPQLEDVSNFLKERTGFSIRPVAGYLSPRDFLSGLAFRVFHCTQYVRHSSDPLYTPEPDTCHELLGHVPLLAEPSFAQFSQEIGLASLGASEETVQKLATCYFFTVEFGLCKQDGQLRVFGAGLLSSISELRHALSGHAKVKPFDPKVACKQECLITSFQDVYFVSESFEDAKEKMREFAKTVKRPFGVKYNPYTQSIQVLRDSKSITSAMNELRHDLDVVNDALARVSRWPSV.

In terms of domain architecture, ACT spans 19-94; sequence TLIFSLKNEV…TVLSVDSPDQ (76 aa). A Phosphoserine; by PKA modification is found at serine 58. L-tryptophan is bound by residues tyrosine 235, arginine 257, and threonine 265. 3 residues coordinate Fe cation: histidine 272, histidine 277, and glutamate 317. L-tryptophan-binding residues include serine 336 and isoleucine 366.

This sequence belongs to the biopterin-dependent aromatic amino acid hydroxylase family. In terms of assembly, homotetramer. Interacts with DNAJC12. The cofactor is Fe(2+). In terms of processing, ubiquitinated, leading to its degradation by the proteasome. Ubiquitinated is triggered by phosphorylation. Post-translationally, phosphorylated; triggering degradation by the proteasome.

The catalysed reaction is (6R)-L-erythro-5,6,7,8-tetrahydrobiopterin + L-tryptophan + O2 = 5-hydroxy-L-tryptophan + (4aS,6R)-4a-hydroxy-L-erythro-5,6,7,8-tetrahydrobiopterin. The protein operates within aromatic compound metabolism; serotonin biosynthesis; serotonin from L-tryptophan: step 1/2. Its function is as follows. Oxidizes L-tryptophan to 5-hydroxy-l-tryptophan in the rate-determining step of serotonin biosynthesis. This is Tryptophan 5-hydroxylase 1 (Tph1) from Rattus norvegicus (Rat).